Reading from the N-terminus, the 396-residue chain is Cytochrome P450 121 (396 aa).

Cys345 is a heme binding site.

It belongs to the cytochrome P450 family. Heme serves as cofactor.

It is found in the cytoplasm. The sequence is that of Cytochrome P450 121 (cyp121) from Mycobacterium bovis (strain ATCC BAA-935 / AF2122/97).